The chain runs to 102 residues: Small ribosomal subunit protein uS10 (102 aa).

It belongs to the universal ribosomal protein uS10 family. In terms of assembly, part of the 30S ribosomal subunit.

Involved in the binding of tRNA to the ribosomes. The protein is Small ribosomal subunit protein uS10 of Bacillus thuringiensis (strain Al Hakam).